Reading from the N-terminus, the 371-residue chain is Phospho-N-acetylmuramoyl-pentapeptide-transferase (371 aa).

The next 10 helical transmembrane spans lie at 25-45 (YLTF…VAMG), 79-99 (TMGG…FADL), 104-124 (VWVV…DDYA), 139-159 (KLIA…IFAP), 179-199 (LVIN…AGFS), 210-230 (GLAI…AYLV), 247-267 (VGEL…FLWY), 274-294 (IFMG…IAVC), 299-319 (LVLG…MIQV), and 348-368 (TVVI…LATL).

Belongs to the glycosyltransferase 4 family. MraY subfamily. Mg(2+) serves as cofactor.

It is found in the cell inner membrane. The catalysed reaction is UDP-N-acetyl-alpha-D-muramoyl-L-alanyl-gamma-D-glutamyl-meso-2,6-diaminopimeloyl-D-alanyl-D-alanine + di-trans,octa-cis-undecaprenyl phosphate = di-trans,octa-cis-undecaprenyl diphospho-N-acetyl-alpha-D-muramoyl-L-alanyl-D-glutamyl-meso-2,6-diaminopimeloyl-D-alanyl-D-alanine + UMP. Its pathway is cell wall biogenesis; peptidoglycan biosynthesis. Catalyzes the initial step of the lipid cycle reactions in the biosynthesis of the cell wall peptidoglycan: transfers peptidoglycan precursor phospho-MurNAc-pentapeptide from UDP-MurNAc-pentapeptide onto the lipid carrier undecaprenyl phosphate, yielding undecaprenyl-pyrophosphoryl-MurNAc-pentapeptide, known as lipid I. This chain is Phospho-N-acetylmuramoyl-pentapeptide-transferase, found in Caulobacter sp. (strain K31).